The sequence spans 315 residues: ADP/ATP translocase 4 (315 aa).

Over 1–19 the chain is Mitochondrial intermembrane; sequence MHREPPKKKAEKRLFDASS. A Solcar 1 repeat occupies 18–110; sequence SSFGKDLLAG…FAFKDKYKQL (93 aa). The helical transmembrane segment at 20–49 threads the bilayer; that stretch reads FGKDLLAGGVAAAVSKTAVAPIERVKLLLQ. The Mitochondrial matrix segment spans residues 50 to 86; the sequence is VQASSKQISPEARYKGMVDCLVRIPREQGFFSFWRGN. The helical transmembrane segment at 87-111 threads the bilayer; sequence LANVIRYFPTQALNFAFKDKYKQLF. ADP is bound by residues Arg92 and Lys104. Topologically, residues 112–121 are mitochondrial intermembrane; that stretch reads MSGVNKEKQF. Residues 122–142 form a helical membrane-spanning segment; it reads WRWFLANLASGGAAGATSLCV. Solcar repeat units lie at residues 123–213 and 220–307; these read RWFL…VKGL and TPFL…IKEF. Residues 143 to 190 are Mitochondrial matrix-facing; it reads VYPLDFARTRLGVDIGKGPEERQFKGLGDCIMKIAKSDGIAGLYQGFG. Residues 191-211 form a helical membrane-spanning segment; sequence VSVQGIIVYRASYFGAYDTVK. The Mitochondrial intermembrane segment spans residues 212-222; that stretch reads GLLPKPKKTPF. Residues 223-243 traverse the membrane as a helical segment; sequence LVSFFIAQVVTTCSGILSYPF. Residues 244 to 283 lie on the Mitochondrial matrix side of the membrane; it reads DTVRRRMMMQSGEAKRQYKGTLDCFVKIYQHEGINSFFRG. Arg247 provides a ligand contact to ADP. Positions 247–252 are important for transport activity; sequence RRRMMM. The Nucleotide carrier signature motif signature appears at 247-252; that stretch reads RRRMMM. The helical transmembrane segment at 284–301 threads the bilayer; that stretch reads AFSNVLRGTGGALVLVLY. At 302-315 the chain is on the mitochondrial intermembrane side; the sequence is DKIKEFFHIDIGGR.

This sequence belongs to the mitochondrial carrier (TC 2.A.29) family. As to quaternary structure, monomer.

Its subcellular location is the mitochondrion inner membrane. It is found in the membrane. The protein localises to the cell projection. It localises to the cilium. The protein resides in the flagellum membrane. It catalyses the reaction ADP(in) + ATP(out) = ADP(out) + ATP(in). The catalysed reaction is dATP(out) + ADP(in) = dATP(in) + ADP(out). It carries out the reaction dADP(in) + ADP(out) = dADP(out) + ADP(in). The enzyme catalyses H(+)(in) = H(+)(out). Its activity is regulated as follows. The matrix-open state (m-state) is inhibited by the membrane-permeable bongkrekic acid (BKA). The cytoplasmic-open state (c-state) is inhibited by the membrane-impermeable toxic inhibitor carboxyatractyloside (CATR). Proton transporter activity is inhibited by ADP:ATP antiporter activity. Functionally, ADP:ATP antiporter that mediates import of ADP into the mitochondrial matrix for ATP synthesis, and export of ATP out to fuel the cell. Cycles between the cytoplasmic-open state (c-state) and the matrix-open state (m-state): operates by the alternating access mechanism with a single substrate-binding site intermittently exposed to either the cytosolic (c-state) or matrix (m-state) side of the inner mitochondrial membrane. Specifically required during spermatogenesis, probably to mediate ADP:ATP exchange in spermatocytes. Large ATP supplies from mitochondria may be critical for normal progression of spermatogenesis during early stages of meiotic prophase I, including DNA double-strand break repair and chromosomal synapsis. In addition to its ADP:ATP antiporter activity, also involved in mitochondrial uncoupling and mitochondrial permeability transition pore (mPTP) activity. Plays a role in mitochondrial uncoupling by acting as a proton transporter: proton transport uncouples the proton flows via the electron transport chain and ATP synthase to reduce the efficiency of ATP production and cause mitochondrial thermogenesis. Proton transporter activity is inhibited by ADP:ATP antiporter activity, suggesting that SLC25A31/ANT4 acts as a master regulator of mitochondrial energy output by maintaining a delicate balance between ATP production (ADP:ATP antiporter activity) and thermogenesis (proton transporter activity). Proton transporter activity requires free fatty acids as cofactor, but does not transport it. Among nucleotides, may also exchange ADP for dATP and dADP. Also plays a key role in mPTP opening, a non-specific pore that enables free passage of the mitochondrial membranes to solutes of up to 1.5 kDa, and which contributes to cell death. It is however unclear if SLC25A31/ANT4 constitutes a pore-forming component of mPTP or regulates it. In Macaca fascicularis (Crab-eating macaque), this protein is ADP/ATP translocase 4.